The sequence spans 213 residues: Leucyl/phenylalanyl-tRNA--protein transferase (213 aa).

This sequence belongs to the L/F-transferase family.

It localises to the cytoplasm. It catalyses the reaction N-terminal L-lysyl-[protein] + L-leucyl-tRNA(Leu) = N-terminal L-leucyl-L-lysyl-[protein] + tRNA(Leu) + H(+). It carries out the reaction N-terminal L-arginyl-[protein] + L-leucyl-tRNA(Leu) = N-terminal L-leucyl-L-arginyl-[protein] + tRNA(Leu) + H(+). The catalysed reaction is L-phenylalanyl-tRNA(Phe) + an N-terminal L-alpha-aminoacyl-[protein] = an N-terminal L-phenylalanyl-L-alpha-aminoacyl-[protein] + tRNA(Phe). Functions in the N-end rule pathway of protein degradation where it conjugates Leu, Phe and, less efficiently, Met from aminoacyl-tRNAs to the N-termini of proteins containing an N-terminal arginine or lysine. This is Leucyl/phenylalanyl-tRNA--protein transferase from Rhodospirillum rubrum (strain ATCC 11170 / ATH 1.1.1 / DSM 467 / LMG 4362 / NCIMB 8255 / S1).